The following is a 221-amino-acid chain: MRAGQPKITGAKITGAIIAGGQSSRMQAGGVSGDKFLQPLGSAPVIAHVIARLQPQVDTLFINSKGDLSRFAAFGLPAVKDIAMNHGGPLVGLLTCLAHASPCRLLLTSAADTPFLPCDLASNLIRKQAETGARIILACSNERVHPIVGLWHTDLVPDLEKWLQYAEKASIFWFAKHIGFEVVNIPLAHAPRLAESYDPFFNINLPDDLLKAREINEALQA.

Residues 18–20, Lys-35, Asn-63, Asp-81, and Asp-112 each bind GTP; that span reads IAG. Asp-112 provides a ligand contact to Mg(2+).

The protein belongs to the MobA family. In terms of assembly, monomer. Mg(2+) is required as a cofactor.

It localises to the cytoplasm. It carries out the reaction Mo-molybdopterin + GTP + H(+) = Mo-molybdopterin guanine dinucleotide + diphosphate. Its function is as follows. Transfers a GMP moiety from GTP to Mo-molybdopterin (Mo-MPT) cofactor (Moco or molybdenum cofactor) to form Mo-molybdopterin guanine dinucleotide (Mo-MGD) cofactor. This is Molybdenum cofactor guanylyltransferase from Brucella melitensis biotype 2 (strain ATCC 23457).